The primary structure comprises 217 residues: Probable GTP-binding protein EngB (217 aa).

Residues 27-201 (GGVEIAFAGR…AQTLSGWYLA (175 aa)) form the EngB-type G domain. Residues 35-42 (GRSNAGKS), 62-66 (GRTQL), 80-83 (DLPG), 147-150 (TKAD), and 180-182 (FSS) contribute to the GTP site. Positions 42 and 64 each coordinate Mg(2+).

The protein belongs to the TRAFAC class TrmE-Era-EngA-EngB-Septin-like GTPase superfamily. EngB GTPase family. Mg(2+) serves as cofactor.

Functionally, necessary for normal cell division and for the maintenance of normal septation. This is Probable GTP-binding protein EngB from Aeromonas salmonicida (strain A449).